A 288-amino-acid polypeptide reads, in one-letter code: Capsid protein (288 aa).

Ala2 is modified (N-acetylalanine; by host).

The protein belongs to the high plain virus capsid family.

It is found in the virion. In High plains virus (isolate Kansas 2004), this protein is Capsid protein.